The chain runs to 415 residues: Maintenance of mitochondrial morphology protein 1 (415 aa).

The Lumenal segment spans residues 1-18 (MADICPSRSEPTLSFTQG). A helical transmembrane segment spans residues 19-39 (LILGQLSVVLLLAAFIKFFIF). At 40 to 415 (GDPPSPEVVA…MPGSMPGSMP (376 aa)) the chain is on the cytoplasmic side. Positions 114-330 (QPESLDWFNV…EPRFQEIALP (217 aa)) constitute an SMP-LTD domain. Residues 373 to 389 (IEAEAHGGADRVPDSLR) show a composition bias toward basic and acidic residues. The segment at 373–415 (IEAEAHGGADRVPDSLRYRHRPRADEEFPGAGSMPGSMPGSMP) is disordered. Low complexity predominate over residues 404 to 415 (GSMPGSMPGSMP).

Belongs to the MMM1 family. As to quaternary structure, homodimer. Component of the ER-mitochondria encounter structure (ERMES) or MDM complex, composed of mmm-1, mdm10, mdm12 and mdm34. A mmm-1 homodimer associates with one molecule of mdm12 on each side in a pairwise head-to-tail manner, and the SMP-LTD domains of mmm-1 and mdm12 generate a continuous hydrophobic tunnel for phospholipid trafficking.

Its subcellular location is the endoplasmic reticulum membrane. Its function is as follows. Component of the ERMES/MDM complex, which serves as a molecular tether to connect the endoplasmic reticulum (ER) and mitochondria. Components of this complex are involved in the control of mitochondrial shape and protein biogenesis, and function in nonvesicular lipid trafficking between the ER and mitochondria. The mdm12-mmm-1 subcomplex functions in the major beta-barrel assembly pathway that is responsible for biogenesis of all outer membrane beta-barrel proteins, and acts in a late step after the SAM complex. The mdm10-mdm12-mmm-1 subcomplex further acts in the TOM40-specific pathway after the action of the mdm12-mmm-1 complex. Essential for establishing and maintaining the structure of mitochondria and maintenance of mtDNA nucleoids. The protein is Maintenance of mitochondrial morphology protein 1 (mmm-1) of Neurospora crassa (strain ATCC 24698 / 74-OR23-1A / CBS 708.71 / DSM 1257 / FGSC 987).